The chain runs to 303 residues: N-acetyl-D-glucosamine kinase (303 aa).

Residues 4–11 and 133–140 each bind ATP; these read GFDIGGTK and GVGGGLVL. Zn(2+) is bound by residues H157, C177, C179, and C184.

This sequence belongs to the ROK (NagC/XylR) family. NagK subfamily.

The catalysed reaction is N-acetyl-D-glucosamine + ATP = N-acetyl-D-glucosamine 6-phosphate + ADP + H(+). Its pathway is cell wall biogenesis; peptidoglycan recycling. Catalyzes the phosphorylation of N-acetyl-D-glucosamine (GlcNAc) derived from cell-wall degradation, yielding GlcNAc-6-P. The sequence is that of N-acetyl-D-glucosamine kinase from Salmonella newport (strain SL254).